A 699-amino-acid chain; its full sequence is UvrABC system protein B (699 aa).

One can recognise a Helicase ATP-binding domain in the interval 35-188 (ERINNGEKDV…DHLLRKFVSM (154 aa)). 48–55 (GATGTGKS) is a binding site for ATP. The Beta-hairpin signature appears at 101-124 (YYDYYQPEAYVAQTDTFIEKDSSI). The region spanning 438–604 (QIDDLLGEIR…PLRKKIADIT (167 aa)) is the Helicase C-terminal domain. In terms of domain architecture, UVR spans 654–689 (VGLIEQLTEQMHGAAAELQFEVAARIRDEVKELKRE).

This sequence belongs to the UvrB family. As to quaternary structure, forms a heterotetramer with UvrA during the search for lesions. Interacts with UvrC in an incision complex.

It is found in the cytoplasm. The UvrABC repair system catalyzes the recognition and processing of DNA lesions. A damage recognition complex composed of 2 UvrA and 2 UvrB subunits scans DNA for abnormalities. Upon binding of the UvrA(2)B(2) complex to a putative damaged site, the DNA wraps around one UvrB monomer. DNA wrap is dependent on ATP binding by UvrB and probably causes local melting of the DNA helix, facilitating insertion of UvrB beta-hairpin between the DNA strands. Then UvrB probes one DNA strand for the presence of a lesion. If a lesion is found the UvrA subunits dissociate and the UvrB-DNA preincision complex is formed. This complex is subsequently bound by UvrC and the second UvrB is released. If no lesion is found, the DNA wraps around the other UvrB subunit that will check the other stand for damage. In Paenarthrobacter aurescens (strain TC1), this protein is UvrABC system protein B.